A 487-amino-acid polypeptide reads, in one-letter code: 7-deoxyloganetin glucosyltransferase (487 aa).

Histidine 25 functions as the Proton acceptor in the catalytic mechanism. An an anthocyanidin-binding site is contributed by histidine 25. Residue aspartate 129 is the Charge relay of the active site. The UDP-alpha-D-glucose site is built by threonine 151, glutamine 366, histidine 381, tryptophan 384, asparagine 385, serine 386, and glutamate 389. Alanine 404 is a binding site for an anthocyanidin. UDP-alpha-D-glucose contacts are provided by glutamate 405 and glutamine 406.

The protein belongs to the UDP-glycosyltransferase family. As to expression, expressed in roots.

It catalyses the reaction 7-deoxyloganetin + UDP-alpha-D-glucose = 7-deoxyloganin + UDP + H(+). Functionally, iridoid glucosyltransferase acting exclusively on 7-deoxyloganetin. No activity with 7-deoxyloganetic acid. This Catharanthus roseus (Madagascar periwinkle) protein is 7-deoxyloganetin glucosyltransferase (UGT85A23).